The sequence spans 363 residues: Outer membrane porin F (363 aa).

An N-terminal signal peptide occupies residues 1–22 (MMKRKILAAVIPALLAAATANA).

Belongs to the Gram-negative porin family. In terms of assembly, homotrimer. Forms mixed heterotrimers with OmpC and with PhoE; other mixed heterotrimers with other porins are also probable.

The protein localises to the cell outer membrane. Functionally, forms pores that allow passive diffusion of small molecules across the outer membrane. The polypeptide is Outer membrane porin F (Salmonella typhimurium (strain SL1344)).